An 873-amino-acid polypeptide reads, in one-letter code: Sine oculis-binding protein homolog (873 aa).

The span at 1–14 shows a compositional bias: basic and acidic residues; it reads MAEMEKEGRPPENK. The tract at residues 1–26 is disordered; sequence MAEMEKEGRPPENKRSRKPAHPVKRE. 2 consecutive FCS-type zinc fingers follow at residues 142–180 and 216–256; these read DDVS…KCFA and FKNN…KCLN. Disordered stretches follow at residues 308–339, 413–484, and 550–646; these read RRKA…DTAN, RGPP…PGAP, and KPPN…PGVL. Polar residues predominate over residues 318–339; that stretch reads AGQSQGPGPSASTTVSPSDTAN. Residues 417–433 are compositionally biased toward low complexity; sequence HHASNPNSPLSNPMLPG. A compositionally biased stretch (pro residues) spans 460–484; that stretch reads IHPPSTPTMPGNPPGLLPPPPPGAP. Positions 614–625 are enriched in basic and acidic residues; sequence EHGRSEVVDLTR. Positions 620–624 match the SUMO interaction motif 1 (SIM); mediates the binding to polysumoylated substrates motif; sequence VVDLT. Serine 629 bears the Phosphoserine mark. Positions 653–657 match the SUMO interaction motif 2 (SIM); mediates the binding to polysumoylated substrates motif; the sequence is VIDLT. Lysine 677 is covalently cross-linked (Glycyl lysine isopeptide (Lys-Gly) (interchain with G-Cter in SUMO2)). Serine 699 carries the post-translational modification Phosphoserine. A disordered region spans residues 730–771; the sequence is AAAEGAKSAEPPPEQPPPPPPPAPPKKLLSPEEPAVSELESV. The segment covering 739–754 has biased composition (pro residues); the sequence is EPPPEQPPPPPPPAPP.

Belongs to the SOBP family. As to quaternary structure, interacts (via SIM domains) with SUMO1 and SUMO2.

In terms of biological role, implicated in development of the cochlea. The chain is Sine oculis-binding protein homolog from Homo sapiens (Human).